The primary structure comprises 428 residues: Histidine--tRNA ligase (428 aa).

It belongs to the class-II aminoacyl-tRNA synthetase family. In terms of assembly, homodimer.

The protein resides in the cytoplasm. The enzyme catalyses tRNA(His) + L-histidine + ATP = L-histidyl-tRNA(His) + AMP + diphosphate + H(+). This Ectopseudomonas mendocina (strain ymp) (Pseudomonas mendocina) protein is Histidine--tRNA ligase.